The primary structure comprises 112 residues: MDHPLPAGRLSPPWKLFADHLRLTVRLTPNGGRDAFDGIDTDSEGETYLGARVTAVPEKGKANKALIALVSKSVGVAKSSVSVISGETARKKILRIEGDPEDLARKLEVFLE.

The protein belongs to the UPF0235 family.

This chain is UPF0235 protein RHE_CH03912, found in Rhizobium etli (strain ATCC 51251 / DSM 11541 / JCM 21823 / NBRC 15573 / CFN 42).